A 175-amino-acid polypeptide reads, in one-letter code: Large ribosomal subunit protein uL18 (175 aa).

The protein belongs to the universal ribosomal protein uL18 family. As to quaternary structure, part of the 50S ribosomal subunit. Contacts the 5S and 23S rRNAs.

Functionally, this is one of the proteins that bind and probably mediate the attachment of the 5S RNA into the large ribosomal subunit, where it forms part of the central protuberance. The polypeptide is Large ribosomal subunit protein uL18 (Methanospirillum hungatei JF-1 (strain ATCC 27890 / DSM 864 / NBRC 100397 / JF-1)).